The primary structure comprises 541 residues: Ankyrin repeat domain-containing protein 13C (541 aa).

The span at 1 to 20 (MTGEKIRSLRRDHKPSKEEG) shows a compositional bias: basic and acidic residues. The interval 1 to 27 (MTGEKIRSLRRDHKPSKEEGDLLEPGD) is disordered. ANK repeat units follow at residues 111–142 (PAHY…QKDN), 143–172 (HGNT…PVKV), and 176–205 (QGWS…QQSR). S411 carries the post-translational modification Phosphoserine.

It localises to the endoplasmic reticulum membrane. Acts as a molecular chaperone for G protein-coupled receptors, regulating their biogenesis and exit from the ER. This is Ankyrin repeat domain-containing protein 13C (ANKRD13C) from Homo sapiens (Human).